Reading from the N-terminus, the 430-residue chain is UDP-N-acetylglucosamine 1-carboxyvinyltransferase 1 (430 aa).

Lys22 to Asn23 is a binding site for phosphoenolpyruvate. Residue Arg93 coordinates UDP-N-acetyl-alpha-D-glucosamine. The active-site Proton donor is the Cys117. Residue Cys117 is modified to 2-(S-cysteinyl)pyruvic acid O-phosphothioketal. UDP-N-acetyl-alpha-D-glucosamine-binding positions include Arg122–Leu126, Asp305, and Val327.

Belongs to the EPSP synthase family. MurA subfamily.

The protein resides in the cytoplasm. It carries out the reaction phosphoenolpyruvate + UDP-N-acetyl-alpha-D-glucosamine = UDP-N-acetyl-3-O-(1-carboxyvinyl)-alpha-D-glucosamine + phosphate. Its pathway is cell wall biogenesis; peptidoglycan biosynthesis. Cell wall formation. Adds enolpyruvyl to UDP-N-acetylglucosamine. The polypeptide is UDP-N-acetylglucosamine 1-carboxyvinyltransferase 1 (Listeria innocua serovar 6a (strain ATCC BAA-680 / CLIP 11262)).